Consider the following 111-residue polypeptide: Probable 4-amino-4-deoxy-L-arabinose-phosphoundecaprenol flippase subunit ArnE (111 aa).

A run of 3 helical transmembrane segments spans residues leucine 38–leucine 58, leucine 61–alanine 81, and valine 89–serine 109. The region spanning leucine 40–serine 109 is the EamA domain.

Belongs to the ArnE family. In terms of assembly, heterodimer of ArnE and ArnF.

It is found in the cell inner membrane. The protein operates within bacterial outer membrane biogenesis; lipopolysaccharide biosynthesis. Functionally, translocates 4-amino-4-deoxy-L-arabinose-phosphoundecaprenol (alpha-L-Ara4N-phosphoundecaprenol) from the cytoplasmic to the periplasmic side of the inner membrane. The protein is Probable 4-amino-4-deoxy-L-arabinose-phosphoundecaprenol flippase subunit ArnE of Salmonella paratyphi A (strain ATCC 9150 / SARB42).